A 76-amino-acid polypeptide reads, in one-letter code: uncharacterized protein (76 aa).

This is an uncharacterized protein from Human cytomegalovirus (strain AD169) (HHV-5).